A 639-amino-acid polypeptide reads, in one-letter code: Mediator of RNA polymerase II transcription subunit 17 (639 aa).

The stretch at 160–187 (RLQSFNAAADKLLKSASRLENEVASETR) forms a coiled coil.

Belongs to the Mediator complex subunit 17 family. As to quaternary structure, component of the Mediator complex.

It localises to the nucleus. Component of the Mediator complex, a coactivator involved in the regulated transcription of nearly all RNA polymerase II-dependent genes. Mediator functions as a bridge to convey information from gene-specific regulatory proteins to the basal RNA polymerase II transcription machinery. Mediator is recruited to promoters by direct interactions with regulatory proteins and serves as a scaffold for the assembly of a functional preinitiation complex with RNA polymerase II and the general transcription factors. This Aspergillus fumigatus (strain ATCC MYA-4609 / CBS 101355 / FGSC A1100 / Af293) (Neosartorya fumigata) protein is Mediator of RNA polymerase II transcription subunit 17 (srb4).